The sequence spans 197 residues: Probable molybdenum cofactor guanylyltransferase (197 aa).

GTP-binding positions include 12-14 (LAG), lysine 24, aspartate 71, and aspartate 103. Residue aspartate 103 coordinates Mg(2+).

Belongs to the MobA family. The cofactor is Mg(2+).

The protein localises to the cytoplasm. The enzyme catalyses Mo-molybdopterin + GTP + H(+) = Mo-molybdopterin guanine dinucleotide + diphosphate. Its function is as follows. Transfers a GMP moiety from GTP to Mo-molybdopterin (Mo-MPT) cofactor (Moco or molybdenum cofactor) to form Mo-molybdopterin guanine dinucleotide (Mo-MGD) cofactor. The sequence is that of Probable molybdenum cofactor guanylyltransferase from Mycobacterium avium (strain 104).